Consider the following 339-residue polypeptide: Uroporphyrinogen decarboxylase (339 aa).

Substrate is bound by residues 21 to 25 (RQAGR), Asp71, Tyr147, Ser202, and His315.

Belongs to the uroporphyrinogen decarboxylase family. Homodimer.

Its subcellular location is the cytoplasm. The catalysed reaction is uroporphyrinogen III + 4 H(+) = coproporphyrinogen III + 4 CO2. The protein operates within porphyrin-containing compound metabolism; protoporphyrin-IX biosynthesis; coproporphyrinogen-III from 5-aminolevulinate: step 4/4. In terms of biological role, catalyzes the decarboxylation of four acetate groups of uroporphyrinogen-III to yield coproporphyrinogen-III. The chain is Uroporphyrinogen decarboxylase from Helicobacter pylori (strain Shi470).